Reading from the N-terminus, the 1196-residue chain is Ice nucleation protein (1196 aa).

Residues 172–1147 (ATYGSTLSGD…LSAGEDSTLI (976 aa)) are octapeptide periodicity. 3 disordered regions span residues 269–304 (GYGSTQTSGEDSSLTAGYGSTQTAQEGSNLTAGYGS), 319–352 (GSTQTSGGDSSLTAGYGSTQTAQEGSNLTSGYGS), and 415–442 (GSTQTSGSDSSLTAGYGSTQTAQEGSNL). 2 stretches are compositionally biased toward polar residues: residues 271–298 (GSTQTSGEDSSLTAGYGSTQTAQEGSNL) and 319–346 (GSTQTSGGDSSLTAGYGSTQTAQEGSNL).

The protein belongs to the bacterial ice nucleation protein family. In terms of assembly, membrane environment or aggregation seems to be required for ice nucleation activity.

The protein resides in the cell outer membrane. Functionally, ice nucleation proteins enable bacteria to nucleate crystallization in supercooled water. The chain is Ice nucleation protein (inaV) from Pseudomonas syringae.